A 368-amino-acid polypeptide reads, in one-letter code: 4-hydroxy-3-methylbut-2-en-1-yl diphosphate synthase (flavodoxin) (368 aa).

[4Fe-4S] cluster-binding residues include C268, C271, C303, and E310.

Belongs to the IspG family. It depends on [4Fe-4S] cluster as a cofactor.

It catalyses the reaction (2E)-4-hydroxy-3-methylbut-2-enyl diphosphate + oxidized [flavodoxin] + H2O + 2 H(+) = 2-C-methyl-D-erythritol 2,4-cyclic diphosphate + reduced [flavodoxin]. The protein operates within isoprenoid biosynthesis; isopentenyl diphosphate biosynthesis via DXP pathway; isopentenyl diphosphate from 1-deoxy-D-xylulose 5-phosphate: step 5/6. Functionally, converts 2C-methyl-D-erythritol 2,4-cyclodiphosphate (ME-2,4cPP) into 1-hydroxy-2-methyl-2-(E)-butenyl 4-diphosphate. This Listeria monocytogenes serotype 4b (strain CLIP80459) protein is 4-hydroxy-3-methylbut-2-en-1-yl diphosphate synthase (flavodoxin).